We begin with the raw amino-acid sequence, 74 residues long: uncharacterized protein (74 aa).

Residues 1 to 19 form the signal peptide; sequence MIGLIVVPILFAIKGIVVG. Residues 26–74 are disordered; that stretch reads KFGKHSNTKDQKEDKDEDKRQSISQRKQHTEWPIEENRIQRRAPNQSAL. 2 stretches are compositionally biased toward basic and acidic residues: residues 32-46 and 53-64; these read NTKD…DKRQ and QHTEWPIEENRI.

This is an uncharacterized protein from Saccharomyces cerevisiae (strain ATCC 204508 / S288c) (Baker's yeast).